We begin with the raw amino-acid sequence, 442 residues long: tRNA modification GTPase MnmE (442 aa).

Positions 21, 79, and 118 each coordinate (6S)-5-formyl-5,6,7,8-tetrahydrofolate. The 154-residue stretch at 214 to 367 folds into the TrmE-type G domain; it reads GFKIAIVGKP…LKEELQNYLN (154 aa). Residue Asn224 coordinates K(+). Residues 224 to 229, 243 to 249, and 268 to 271 each bind GTP; these read NVGKSS, SDIAGTT, and DTAG. A Mg(2+)-binding site is contributed by Ser228. Positions 243, 245, and 248 each coordinate K(+). Thr249 is a binding site for Mg(2+). Lys442 is a binding site for (6S)-5-formyl-5,6,7,8-tetrahydrofolate.

The protein belongs to the TRAFAC class TrmE-Era-EngA-EngB-Septin-like GTPase superfamily. TrmE GTPase family. In terms of assembly, homodimer. Heterotetramer of two MnmE and two MnmG subunits. It depends on K(+) as a cofactor.

It is found in the cytoplasm. Its function is as follows. Exhibits a very high intrinsic GTPase hydrolysis rate. Involved in the addition of a carboxymethylaminomethyl (cmnm) group at the wobble position (U34) of certain tRNAs, forming tRNA-cmnm(5)s(2)U34. This Campylobacter jejuni subsp. jejuni serotype O:23/36 (strain 81-176) protein is tRNA modification GTPase MnmE.